Consider the following 277-residue polypeptide: Large ribosomal subunit protein uL2 (277 aa).

Residues 226-277 form a disordered region; the sequence is MNPVDHPHGGGEGRSPIGMPSPVTPWGKPTLGYKTRKPNKKSDRLIVSRRKK.

It belongs to the universal ribosomal protein uL2 family. In terms of assembly, part of the 50S ribosomal subunit. Forms a bridge to the 30S subunit in the 70S ribosome.

One of the primary rRNA binding proteins. Required for association of the 30S and 50S subunits to form the 70S ribosome, for tRNA binding and peptide bond formation. It has been suggested to have peptidyltransferase activity; this is somewhat controversial. Makes several contacts with the 16S rRNA in the 70S ribosome. The chain is Large ribosomal subunit protein uL2 from Symbiobacterium thermophilum (strain DSM 24528 / JCM 14929 / IAM 14863 / T).